A 926-amino-acid chain; its full sequence is Neurofilament medium polypeptide (926 aa).

Over residues 1 to 10 (MSYTLDSLGN) the composition is skewed to polar residues. Disordered stretches follow at residues 1 to 51 (MSYT…VSSS) and 79 to 102 (QSSS…SNEK). Residue Ser-2 is modified to N-acetylserine. The interval 2–104 (SYTLDSLGNP…KLSRSNEKEQ (103 aa)) is head. The span at 21–44 (RSSFSRISGSPSSGFRSQSWSRGS) shows a compositional bias: low complexity. At Ser-30 the chain carries Phosphoserine. The residue at position 42 (Arg-42) is an Omega-N-methylarginine. The O-linked (GlcNAc) threonine glycan is linked to Thr-47. Ser-99 bears the Phosphoserine mark. One can recognise an IF rod domain in the interval 101–412 (EKEQIQGLND…KLLEGEETRF (312 aa)). The tract at residues 105–136 (IQGLNDRFAGYIEKVHYLEQQNKEIEAEIQAL) is coil 1A. The segment at 137 to 149 (RQKQASHAQLGDA) is linker 1. The tract at residues 150 to 248 (YDQEIRELRA…EEEVADLLAQ (99 aa)) is coil 1B. A Phosphoserine modification is found at Ser-226. The linker 12 stretch occupies residues 249 to 265 (IQASHITVERKDYLKTD). The interval 266 to 287 (ISTALKEIRSQLESHSDQNMHQ) is coil 2A. Residues 288–291 (AEEW) form a linker 2 region. The segment at 292-412 (FKCRYAKLTE…KLLEGEETRF (121 aa)) is coil 2B. Tyr-320 carries the post-translational modification Phosphotyrosine. Phosphoserine occurs at positions 346, 418, 430, 468, and 484. The interval 413 to 926 (STFAGSITGP…AIVKEVTQSD (514 aa)) is tail. The tract at residues 487 to 860 (EEVKEEEAEE…EKKGGDKSEE (374 aa)) is disordered. Acidic residues predominate over residues 490-507 (KEEEAEEKEEKEEAEEEV). Repeat unit 1 spans residues 512 to 516 (KSPVK). A 17 X 5 AA approximate tandem repeats of K-S-P-[TVEA]-[AKETP] region spans residues 512–698 (KSPVKATAPE…KSPAPKSPVE (187 aa)). Ser-513 carries the post-translational modification Phosphoserine. Acidic residues predominate over residues 523-543 (KEEEGEKEEEEGQEEEEEEEE). Residues 544-563 (AAKSDQAEEGGSEKEGSSEK) show a composition bias toward basic and acidic residues. 4 positions are modified to phosphoserine: Ser-547, Ser-555, Ser-560, and Ser-561. Over residues 564–584 (EEGEQEEEGETEAEGEGEEAA) the composition is skewed to acidic residues. The residue at position 574 (Thr-574) is a Phosphothreonine. Residues 585 to 619 (AEAKEEKKMEEKAEEVAPKEELAAEAKVEKPEKAK) show a composition bias toward basic and acidic residues. 16 repeat units span residues 619-623 (KSPVA), 624-628 (KSPTT), 629-633 (KSPTA), 634-638 (KSPEA), 639-643 (KSPEA), 644-648 (KSPTA), 649-653 (KSPTA), 654-658 (KSPVA), 659-663 (KSPTA), 664-668 (KSPEA), 669-673 (KSPEA), 674-678 (KSPTA), 679-683 (KSPTA), 684-688 (KSPAA), 689-693 (KSPAP), and 694-698 (KSPVE). The residue at position 628 (Thr-628) is a Phosphothreonine. Ser-630, Ser-635, and Ser-640 each carry phosphoserine. Thr-647 is modified (phosphothreonine). Phosphoserine is present on residues Ser-650 and Ser-655. Residues Ser-665 and Ser-670 each carry the phosphoserine modification. Residues 673 to 692 (AKSPTAKSPTAKSPAAKSPA) show a composition bias toward low complexity. Thr-677 bears the Phosphothreonine mark. Phosphoserine is present on residues Ser-680, Ser-685, Ser-690, Ser-695, Ser-727, Ser-751, Ser-757, Ser-771, Ser-831, and Ser-847. Basic and acidic residues-rich tracts occupy residues 696 to 764 (PVEE…EEVP), 771 to 811 (SPEK…KEDI), and 826 to 838 (TKEK…EEKG). Over residues 849-860 (GDEKKGGDKSEE) the composition is skewed to basic and acidic residues.

In terms of assembly, forms heterodimers with NEFL; which can further hetero-oligomerize (in vitro). Forms heterodimers with INA (in vitro). Phosphorylated on a number of serine residues in the repeated K-S-P tripeptide motif. Phosphorylation of NFH may result in the formation of interfilament cross-links that are important in the maintenance of axonal caliber. Post-translationally, phosphorylation seems to play a major role in the functioning of the larger neurofilament polypeptides (NF-M and NF-H), the levels of phosphorylation being altered developmentally and coincidentally with a change in the neurofilament function. In terms of processing, phosphorylated in the head and rod regions by the PKC kinase PKN1, leading to the inhibition of polymerization.

It localises to the cytoplasm. Its subcellular location is the cytoskeleton. It is found in the cell projection. The protein localises to the axon. In terms of biological role, neurofilaments usually contain three intermediate filament proteins: NEFL, NEFM, and NEFH which are involved in the maintenance of neuronal caliber. May additionally cooperate with the neuronal intermediate filament proteins PRPH and INA to form neuronal filamentous networks. In Bos taurus (Bovine), this protein is Neurofilament medium polypeptide (NEFM).